Here is a 469-residue protein sequence, read N- to C-terminus: MAGAAAAVASGISIRPVAAPKISRAPRSRSVVRAAVSIDEKAYTVQKSEEIFNAAKELMPGGVNSPVRAFKSVGGQPIVFDSVKGSHMWDVDGNEYIDYVGSWGPAIIGHADDKVNAALIETLKKGTSFGAPCALENVLAQMVISAVPSIEMVRFVNSGTEACMGALRLVRAFTGREKILKFEGCYHGHADSFLVKAGSGVATLGLPDSPGVPKGATVGTLTAPYNDADAVKKLFEDNKGEIAAVFLEPVVGNAGFIPPQPAFLNALREVTKQDGALLVFDEVMTGFRLAYGGAQEYFGITPDVTTLGKIIGGGLPVGAYGGRKDIMEMVAPAGPMYQAGTLSGNPLAMTAGIHTLKRLMEPGTYEYLDKVTGELVRGILDVGAKTGHEMCGGHIRGMFGFFFAGGPVHNFDDAKKSDTAKFGRFHRGMLGEGVYLAPSQFEAGFTSLAHTTQDIEKTVEAAEKVLRWI.

The N-terminal 34 residues, 1–34 (MAGAAAAVASGISIRPVAAPKISRAPRSRSVVRA), are a transit peptide targeting the chloroplast. Lys-309 is modified (N6-(pyridoxal phosphate)lysine).

The protein belongs to the class-III pyridoxal-phosphate-dependent aminotransferase family. HemL subfamily. As to quaternary structure, homodimer. Pyridoxal 5'-phosphate serves as cofactor.

The protein resides in the plastid. It is found in the chloroplast. It catalyses the reaction (S)-4-amino-5-oxopentanoate = 5-aminolevulinate. The protein operates within porphyrin-containing compound metabolism; protoporphyrin-IX biosynthesis; 5-aminolevulinate from L-glutamyl-tRNA(Glu): step 2/2. Its pathway is porphyrin-containing compound metabolism; chlorophyll biosynthesis. The polypeptide is Glutamate-1-semialdehyde 2,1-aminomutase, chloroplastic (GSA) (Hordeum vulgare (Barley)).